Here is a 247-residue protein sequence, read N- to C-terminus: Transmembrane protein 69 (247 aa).

5 helical membrane passes run 97 to 117 (ALCVTLAGLIPFVAPPLVMLM), 122 to 142 (IPILAFTQMAYGASFLSFLGG), 159 to 179 (YLNLASSAAPLFFSWFAFLIS), 185 to 205 (AIVTVIMGMGVAFHLELFLLP), and 216 to 236 (IVVTLLATFSFIITLVVKSSF).

The protein resides in the membrane. This Homo sapiens (Human) protein is Transmembrane protein 69 (TMEM69).